We begin with the raw amino-acid sequence, 281 residues long: MGKLGAYVEISRPKNALMSILGTLTGWVNSTSVYDGRLILACLIPPLVLMAGNAINDYYDAEIDAINKPYRPIPSGRISKREALNIYIALSLFGIALSIFLGFIEFLIVTAFSLSWYAYARWLKRTGVPGNALVSLGVAFTLIFGSLAAGNLTNKVIIFSSVAFTSNLIREFVKAVEDLPGDRAHGVRTIAVRIGVKRTGILVFLLSLATVVLTILPVIFRLTGIIYLSLSVIISLPILMLASAICLKGKLEERARETSSLIKVSMFLGLLGMLLDPFRVV.

Helical transmembrane passes span 88 to 108 (IALSLFGIALSIFLGFIEFLI), 132 to 152 (ALVSLGVAFTLIFGSLAAGNL), 200 to 220 (GILVFLLSLATVVLTILPVIF), 225 to 245 (IIYLSLSVIISLPILMLASAI), and 261 to 281 (LIKVSMFLGLLGMLLDPFRVV).

The protein belongs to the UbiA prenyltransferase family. DGGGP synthase subfamily. Mg(2+) serves as cofactor.

The protein localises to the cell membrane. It catalyses the reaction sn-3-O-(geranylgeranyl)glycerol 1-phosphate + (2E,6E,10E)-geranylgeranyl diphosphate = 2,3-bis-O-(geranylgeranyl)-sn-glycerol 1-phosphate + diphosphate. The protein operates within membrane lipid metabolism; glycerophospholipid metabolism. Functionally, prenyltransferase that catalyzes the transfer of the geranylgeranyl moiety of geranylgeranyl diphosphate (GGPP) to the C2 hydroxyl of (S)-3-O-geranylgeranylglyceryl phosphate (GGGP). This reaction is the second ether-bond-formation step in the biosynthesis of archaeal membrane lipids. This is Digeranylgeranylglyceryl phosphate synthase from Korarchaeum cryptofilum (strain OPF8).